A 72-amino-acid polypeptide reads, in one-letter code: UPF0270 protein KPK_0377 (72 aa).

Belongs to the UPF0270 family.

This Klebsiella pneumoniae (strain 342) protein is UPF0270 protein KPK_0377.